Here is a 168-residue protein sequence, read N- to C-terminus: uncharacterized protein (168 aa).

Residues 24 to 44 form a helical membrane-spanning segment; sequence FIGIVLFLAVLIIGILILILF. 2 disordered regions span residues 69–92 and 142–168; these read SPSS…NNSN and NNNN…TKNI. Over residues 142–157 the composition is skewed to low complexity; sequence NNNNNNNNNPPTNISN.

It is found in the membrane. This is an uncharacterized protein from Dictyostelium discoideum (Social amoeba).